The primary structure comprises 325 residues: ATP synthase gamma chain (325 aa).

This sequence belongs to the ATPase gamma chain family. F-type ATPases have 2 components, CF(1) - the catalytic core - and CF(0) - the membrane proton channel. CF(1) has five subunits: alpha(3), beta(3), gamma(1), delta(1), epsilon(1). CF(0) has three main subunits: a, b and c.

Its subcellular location is the cell membrane. Produces ATP from ADP in the presence of a proton gradient across the membrane. The gamma chain is believed to be important in regulating ATPase activity and the flow of protons through the CF(0) complex. This Corynebacterium glutamicum (strain R) protein is ATP synthase gamma chain.